Consider the following 267-residue polypeptide: Exodeoxyribonuclease III (267 aa).

Glutamate 34 provides a ligand contact to Mg(2+). Residue tyrosine 109 is part of the active site. The Mg(2+) site is built by aspartate 151, asparagine 153, and aspartate 258. Residue aspartate 151 is the Proton donor/acceptor of the active site.

It belongs to the DNA repair enzymes AP/ExoA family. Monomer. It depends on Mg(2+) as a cofactor. Mn(2+) is required as a cofactor.

The enzyme catalyses Exonucleolytic cleavage in the 3'- to 5'-direction to yield nucleoside 5'-phosphates.. In terms of biological role, major apurinic-apyrimidinic endonuclease of E.coli. It removes the damaged DNA at cytosines and guanines by cleaving on the 3'-side of the AP site by a beta-elimination reaction. The chain is Exodeoxyribonuclease III (xthA) from Haemophilus influenzae (strain ATCC 51907 / DSM 11121 / KW20 / Rd).